Consider the following 338-residue polypeptide: Holliday junction branch migration complex subunit RuvB (338 aa).

The large ATPase domain (RuvB-L) stretch occupies residues 4–184 (SDRLVSGKAR…FGISHHLQYY (181 aa)). ATP contacts are provided by residues Arg-24, Gly-65, Lys-68, Thr-69, Thr-70, 131 to 133 (EDY), Arg-174, Tyr-184, and Arg-221. Thr-69 is a Mg(2+) binding site. The tract at residues 185 to 255 (HHDELTQIVM…LADEALELLA (71 aa)) is small ATPAse domain (RuvB-S). The tract at residues 258–338 (HLGFDALDRR…NIEVPDGRNS (81 aa)) is head domain (RuvB-H). 3 residues coordinate DNA: Arg-294, Arg-313, and Arg-318.

Belongs to the RuvB family. As to quaternary structure, homohexamer. Forms an RuvA(8)-RuvB(12)-Holliday junction (HJ) complex. HJ DNA is sandwiched between 2 RuvA tetramers; dsDNA enters through RuvA and exits via RuvB. An RuvB hexamer assembles on each DNA strand where it exits the tetramer. Each RuvB hexamer is contacted by two RuvA subunits (via domain III) on 2 adjacent RuvB subunits; this complex drives branch migration. In the full resolvosome a probable DNA-RuvA(4)-RuvB(12)-RuvC(2) complex forms which resolves the HJ.

Its subcellular location is the cytoplasm. It carries out the reaction ATP + H2O = ADP + phosphate + H(+). Functionally, the RuvA-RuvB-RuvC complex processes Holliday junction (HJ) DNA during genetic recombination and DNA repair, while the RuvA-RuvB complex plays an important role in the rescue of blocked DNA replication forks via replication fork reversal (RFR). RuvA specifically binds to HJ cruciform DNA, conferring on it an open structure. The RuvB hexamer acts as an ATP-dependent pump, pulling dsDNA into and through the RuvAB complex. RuvB forms 2 homohexamers on either side of HJ DNA bound by 1 or 2 RuvA tetramers; 4 subunits per hexamer contact DNA at a time. Coordinated motions by a converter formed by DNA-disengaged RuvB subunits stimulates ATP hydrolysis and nucleotide exchange. Immobilization of the converter enables RuvB to convert the ATP-contained energy into a lever motion, pulling 2 nucleotides of DNA out of the RuvA tetramer per ATP hydrolyzed, thus driving DNA branch migration. The RuvB motors rotate together with the DNA substrate, which together with the progressing nucleotide cycle form the mechanistic basis for DNA recombination by continuous HJ branch migration. Branch migration allows RuvC to scan DNA until it finds its consensus sequence, where it cleaves and resolves cruciform DNA. The sequence is that of Holliday junction branch migration complex subunit RuvB from Dichelobacter nodosus (strain VCS1703A).